A 466-amino-acid polypeptide reads, in one-letter code: Glutamate--tRNA ligase 1 (466 aa).

A 'HIGH' region motif is present at residues 9–19 (PSPTGMLHIGG). The short motif at 238 to 242 (KLSKR) is the 'KMSKS' region element. Residue lysine 241 coordinates ATP.

The protein belongs to the class-I aminoacyl-tRNA synthetase family. Glutamate--tRNA ligase type 1 subfamily. In terms of assembly, monomer.

The protein localises to the cytoplasm. The enzyme catalyses tRNA(Glu) + L-glutamate + ATP = L-glutamyl-tRNA(Glu) + AMP + diphosphate. In terms of biological role, catalyzes the attachment of glutamate to tRNA(Glu) in a two-step reaction: glutamate is first activated by ATP to form Glu-AMP and then transferred to the acceptor end of tRNA(Glu). The chain is Glutamate--tRNA ligase 1 from Acidiphilium cryptum (strain JF-5).